The following is a 130-amino-acid chain: Small ribosomal subunit protein uS9 (130 aa).

The protein belongs to the universal ribosomal protein uS9 family.

This Pseudomonas putida (strain W619) protein is Small ribosomal subunit protein uS9.